The primary structure comprises 158 residues: Ribonuclease H (158 aa).

One can recognise an RNase H type-1 domain in the interval 1–147 (MKVTIYTDGA…CDVLATTAAD (147 aa)). Positions 8, 52, 74, and 139 each coordinate Mg(2+).

The protein belongs to the RNase H family. In terms of assembly, monomer. The cofactor is Mg(2+).

The protein localises to the cytoplasm. It catalyses the reaction Endonucleolytic cleavage to 5'-phosphomonoester.. Functionally, endonuclease that specifically degrades the RNA of RNA-DNA hybrids. The polypeptide is Ribonuclease H (Lachnoclostridium phytofermentans (strain ATCC 700394 / DSM 18823 / ISDg) (Clostridium phytofermentans)).